The chain runs to 248 residues: tRNA (guanine-N(7)-)-methyltransferase (248 aa).

S-adenosyl-L-methionine is bound by residues Glu80, Glu105, Asp132, and Asp155. Asp155 is a catalytic residue. Residues Lys159, Asp191, and 223-226 (TKFE) each bind substrate.

Belongs to the class I-like SAM-binding methyltransferase superfamily. TrmB family.

The enzyme catalyses guanosine(46) in tRNA + S-adenosyl-L-methionine = N(7)-methylguanosine(46) in tRNA + S-adenosyl-L-homocysteine. It participates in tRNA modification; N(7)-methylguanine-tRNA biosynthesis. Catalyzes the formation of N(7)-methylguanine at position 46 (m7G46) in tRNA. The chain is tRNA (guanine-N(7)-)-methyltransferase from Nocardioides sp. (strain ATCC BAA-499 / JS614).